Here is a 401-residue protein sequence, read N- to C-terminus: Acetate kinase (401 aa).

A Mg(2+)-binding site is contributed by N9. Residue K16 coordinates ATP. Substrate is bound at residue R88. The Proton donor/acceptor role is filled by D147. ATP is bound by residues 207-211, 282-284, and 333-337; these read HLGNG, DCR, and GIGEN. Residue E388 coordinates Mg(2+).

It belongs to the acetokinase family. In terms of assembly, homodimer. Mg(2+) is required as a cofactor. It depends on Mn(2+) as a cofactor.

The protein localises to the cytoplasm. The catalysed reaction is acetate + ATP = acetyl phosphate + ADP. The protein operates within metabolic intermediate biosynthesis; acetyl-CoA biosynthesis; acetyl-CoA from acetate: step 1/2. Catalyzes the formation of acetyl phosphate from acetate and ATP. Can also catalyze the reverse reaction. This chain is Acetate kinase, found in Haemophilus influenzae (strain 86-028NP).